The primary structure comprises 295 residues: Glutamate 5-kinase (295 aa).

Lysine 9 contributes to the ATP binding site. Positions 49, 136, and 148 each coordinate substrate. ATP is bound by residues 168–169 (TD) and 210–216 (TGGMLTK).

It belongs to the glutamate 5-kinase family.

It localises to the cytoplasm. It carries out the reaction L-glutamate + ATP = L-glutamyl 5-phosphate + ADP. It participates in amino-acid biosynthesis; L-proline biosynthesis; L-glutamate 5-semialdehyde from L-glutamate: step 1/2. Its function is as follows. Catalyzes the transfer of a phosphate group to glutamate to form L-glutamate 5-phosphate. This chain is Glutamate 5-kinase, found in Neisseria gonorrhoeae (strain NCCP11945).